The following is a 90-amino-acid chain: Small ribosomal subunit protein bS16 (90 aa).

It belongs to the bacterial ribosomal protein bS16 family.

The protein is Small ribosomal subunit protein bS16 of Geobacillus thermodenitrificans (strain NG80-2).